The primary structure comprises 237 residues: Necrosis-inducing protein NPP1 (237 aa).

The signal sequence occupies residues 1–19; that stretch reads MNVLTFLIAAAVSLAVVQA. Residue Asn67 is glycosylated (N-linked (GlcNAc...) asparagine). Positions 103–113 match the Conserved undecapeptide motif motif; it reads AIMYSWYFPKD. The Conserved heptapetpide motif signature appears at 120–126; that stretch reads GHRHDWE.

Belongs to the Necrosis inducing protein (NPP1) family.

It localises to the secreted. Functionally, secreted effector that acts as a pathogen-associated molecular pattern (PAMP) recognized by the plant immune system. Induces necrotic cell death and ethylene biosynthesis in parsley. Stimulates early induced host cellular responses implicated in elicitor signal transmission such as increased levels of cytoplasmic calcium, production of reactive oxygen species (ROS), and MAP kinase activation. Infiltration of NPP1 into leaves of Arabidopsis thaliana results in transcript accumulation of pathogenesis-related (PR) genes, production of ROS and ethylene, callose apposition, and hypersensitive response (HR)-like cell death. NPP1-mediated induction of the PR1 gene is salicylic acid-dependent, and requires both functional NDR1 and PAD4. In Phytophthora nicotianae (Potato buckeye rot agent), this protein is Necrosis-inducing protein NPP1.